Consider the following 599-residue polypeptide: Elongation factor 4 (599 aa).

Residues 2 to 184 (KNIRNFSIIA…RLVRDIPPPE (183 aa)) form the tr-type G domain. GTP-binding positions include 14-19 (DHGKST) and 131-134 (NKID).

Belongs to the TRAFAC class translation factor GTPase superfamily. Classic translation factor GTPase family. LepA subfamily.

It localises to the cell inner membrane. The catalysed reaction is GTP + H2O = GDP + phosphate + H(+). In terms of biological role, required for accurate and efficient protein synthesis under certain stress conditions. May act as a fidelity factor of the translation reaction, by catalyzing a one-codon backward translocation of tRNAs on improperly translocated ribosomes. Back-translocation proceeds from a post-translocation (POST) complex to a pre-translocation (PRE) complex, thus giving elongation factor G a second chance to translocate the tRNAs correctly. Binds to ribosomes in a GTP-dependent manner. The protein is Elongation factor 4 of Escherichia coli (strain SE11).